The following is a 590-amino-acid chain: Enhancer of polycomb-like protein 1 (590 aa).

2 disordered regions span residues 302 to 335 and 471 to 497; these read DEDLVNQKPQKRKPVEPPVVRQPTGAHLRQPVRS and TPPRELGEDRSDRWKYDSDSDDEEPPV. Residues 475–488 show a composition bias toward basic and acidic residues; that stretch reads ELGEDRSDRWKYDS.

The protein belongs to the enhancer of polycomb family. As to quaternary structure, component of the NuA4 histone acetyltransferase complex.

The protein resides in the nucleus. In terms of biological role, component of the NuA4 histone acetyltransferase complex which is involved in transcriptional activation of selected genes principally by acetylation of nucleosomal histone H4 and H2A. The NuA4 complex is also involved in DNA repair. Involved in gene silencing by neighboring heterochromatin, blockage of the silencing spreading along the chromosome, and required for cell cycle progression through G2/M. The polypeptide is Enhancer of polycomb-like protein 1 (EPL1) (Gibberella zeae (strain ATCC MYA-4620 / CBS 123657 / FGSC 9075 / NRRL 31084 / PH-1) (Wheat head blight fungus)).